The following is a 345-amino-acid chain: Molybdopterin synthase catalytic subunit (345 aa).

Residues 101-102 (HR), Lys-117, and 124-126 (KKE) each bind substrate.

This sequence belongs to the MoaE family. MOCS2B subfamily. Heterotetramer; composed of 2 small (Mocs2A) and 2 large (Mocs2B) subunits.

The protein localises to the cytoplasm. It carries out the reaction 2 [molybdopterin-synthase sulfur-carrier protein]-C-terminal-Gly-aminoethanethioate + cyclic pyranopterin phosphate + H2O = molybdopterin + 2 [molybdopterin-synthase sulfur-carrier protein]-C-terminal Gly-Gly + 2 H(+). It participates in cofactor biosynthesis; molybdopterin biosynthesis. Functionally, catalytic subunit of the molybdopterin synthase complex, a complex that catalyzes the conversion of precursor Z into molybdopterin. Acts by mediating the incorporation of 2 sulfur atoms from thiocarboxylated Mocs2A into precursor Z to generate a dithiolene group. In Drosophila virilis (Fruit fly), this protein is Molybdopterin synthase catalytic subunit.